A 482-amino-acid polypeptide reads, in one-letter code: BEL1-like homeodomain protein 7 (482 aa).

Residues serine 118–valine 134 are SR/KY domain. The interval glutamate 167 to isoleucine 238 is BELL domain. Residues threonine 285–methionine 347 constitute a DNA-binding region (homeobox). The interval aspartate 358–arginine 401 is disordered. Residues asparagine 363 to arginine 401 are compositionally biased toward polar residues.

This sequence belongs to the TALE/BELL homeobox family. As to quaternary structure, may form heterodimeric complexes with TALE/KNOX proteins.

The protein resides in the nucleus. The chain is BEL1-like homeodomain protein 7 (BLH7) from Arabidopsis thaliana (Mouse-ear cress).